The sequence spans 219 residues: Claudin-3 (219 aa).

Residues 1–8 are Cytoplasmic-facing; sequence MSMGLEIT. A helical membrane pass occupies residues 9–29; sequence GTSLAVLGWLCTIVCCALPMW. Residues 30-80 lie on the Extracellular side of the membrane; the sequence is RVSAFIGSSIITAQITWEGLWMNCVVQSTGQMQCKMYDSLLALPQDLQAAR. A helical transmembrane segment spans residues 81-101; it reads ALIVVSILLAAFGLLVALVGA. Residues 102–115 lie on the Cytoplasmic side of the membrane; it reads QCTNCVQDETAKAK. Residues 116-136 form a helical membrane-spanning segment; it reads ITIVAGVLFLLAAVLTLVPVS. The Extracellular portion of the chain corresponds to 137–161; the sequence is WSANTIIRDFYNPLVPEAQKREMGT. The helical transmembrane segment at 162 to 182 threads the bilayer; it reads GLYVGWAAAALQLLGGALLCC. The Cytoplasmic segment spans residues 183 to 219; the sequence is SCPPREKYAPTKILYSAPRSTGPGTGTGTAYDRKDYV. Tyr-197 carries the phosphotyrosine modification. Ser-198 carries the post-translational modification Phosphoserine. Residues 218–219 are interactions with TJP1, TJP2 and TJP3; the sequence is YV.

The protein belongs to the claudin family. In terms of assembly, can form homo- and heteropolymers with other CLDN. Homopolymers interact with CLDN1 and CLDN2 homopolymers. Interacts in cis (within the same plasma membrane) with CLDN19. Directly interacts with TJP1/ZO-1, TJP2/ZO-2 and TJP3/ZO-3.

It localises to the cell junction. It is found in the tight junction. The protein resides in the cell membrane. Its function is as follows. Plays a major role in tight junction-specific obliteration of the intercellular space, through calcium-independent cell-adhesion activity. The polypeptide is Claudin-3 (Cldn3) (Rattus norvegicus (Rat)).